The sequence spans 177 residues: Large ribosomal subunit protein uL6 (177 aa).

This sequence belongs to the universal ribosomal protein uL6 family. As to quaternary structure, part of the 50S ribosomal subunit.

Its function is as follows. This protein binds to the 23S rRNA, and is important in its secondary structure. It is located near the subunit interface in the base of the L7/L12 stalk, and near the tRNA binding site of the peptidyltransferase center. The sequence is that of Large ribosomal subunit protein uL6 from Bradyrhizobium sp. (strain BTAi1 / ATCC BAA-1182).